The chain runs to 180 residues: Large ribosomal subunit protein uL6 (180 aa).

It belongs to the universal ribosomal protein uL6 family. As to quaternary structure, part of the 50S ribosomal subunit.

In terms of biological role, this protein binds to the 23S rRNA, and is important in its secondary structure. It is located near the subunit interface in the base of the L7/L12 stalk, and near the tRNA binding site of the peptidyltransferase center. This is Large ribosomal subunit protein uL6 from Anaeromyxobacter dehalogenans (strain 2CP-C).